The following is a 251-amino-acid chain: 14-3-3-like protein (251 aa).

Belongs to the 14-3-3 family. In terms of tissue distribution, most abundant in roots and flowers.

In Nicotiana tabacum (Common tobacco), this protein is 14-3-3-like protein.